The sequence spans 338 residues: Dodecaprenyl-phosphate galacturonate synthase (338 aa).

2 helical membrane passes run 254–274 (FFGS…LYLG) and 289–309 (MLMV…TGIL).

Belongs to the glycosyltransferase 2 family.

It localises to the cell membrane. It carries out the reaction di-trans,nona-cis-dodecaprenyl phosphate + UDP-alpha-D-galacturonate = beta-D-galacturonosyl di-trans,nona-cis-dodecaprenyl phosphate + UDP. In terms of biological role, glycosyltransferase that catalyzes the synthesis of dodecaprenyl-phosphate galacturonate (Dod-P-GalA), likely from UDP-GalA and dodecaprenyl-phosphate. Dod-P-GalA is the lipid donor required for GalA transfer to lipopolysaccharide (LPS) specific residues catalyzed by the GalA transferases RgtA, RgtB, RgtC and RgtD. This chain is Dodecaprenyl-phosphate galacturonate synthase, found in Rhizobium johnstonii (strain DSM 114642 / LMG 32736 / 3841) (Rhizobium leguminosarum bv. viciae).